A 492-amino-acid polypeptide reads, in one-letter code: PTS system N-acetylmuramic acid-specific EIIBC component (492 aa).

In terms of domain architecture, PTS EIIB type-1 spans 1–89 (MAKINQSVIA…NELLNSSTPT (89 aa)). Cys28 (phosphocysteine intermediate; for EIIB activity) is an active-site residue. The PTS EIIC type-1 domain occupies 123–487 (TKFATIFTPL…KKIEVLKADV (365 aa)). Helical transmembrane passes span 125–145 (FATI…LLGF), 167–187 (IIGY…ILIG), 193–213 (AFGG…LSYN), 227–247 (FFGY…AAIL), 265–285 (MILT…IFIM), 311–331 (ILAG…FVPV), 344–364 (LFPI…ALYV), 378–398 (GAII…VTLP), 403–423 (FITA…IAYL), and 450–470 (IFVG…SGFV).

The protein resides in the cell inner membrane. The catalysed reaction is N-acetyl-beta-D-muramate(out) + N(pros)-phospho-L-histidyl-[protein] = N-acetyl-beta-D-muramate 6-phosphate(in) + L-histidyl-[protein]. Functionally, the phosphoenolpyruvate-dependent sugar phosphotransferase system (sugar PTS), a major carbohydrate active transport system, catalyzes the phosphorylation of incoming sugar substrates concomitantly with their translocation across the cell membrane. This system is involved in N-acetylmuramic acid (MurNAc) transport, yielding cytoplasmic MurNAc-6-P. Is also able to take up anhydro-N-acetylmuramic acid (anhMurNAc), but cannot phosphorylate the carbon 6, probably because of the 1,6-anhydro ring. The chain is PTS system N-acetylmuramic acid-specific EIIBC component (murP) from Photorhabdus laumondii subsp. laumondii (strain DSM 15139 / CIP 105565 / TT01) (Photorhabdus luminescens subsp. laumondii).